A 199-amino-acid chain; its full sequence is 7-methyl-GTP pyrophosphatase (199 aa).

Aspartate 74 serves as the catalytic Proton acceptor.

This sequence belongs to the Maf family. YceF subfamily. Requires a divalent metal cation as cofactor.

Its subcellular location is the cytoplasm. The enzyme catalyses N(7)-methyl-GTP + H2O = N(7)-methyl-GMP + diphosphate + H(+). Nucleoside triphosphate pyrophosphatase that hydrolyzes 7-methyl-GTP (m(7)GTP). May have a dual role in cell division arrest and in preventing the incorporation of modified nucleotides into cellular nucleic acids. In Cupriavidus metallidurans (strain ATCC 43123 / DSM 2839 / NBRC 102507 / CH34) (Ralstonia metallidurans), this protein is 7-methyl-GTP pyrophosphatase.